Here is a 139-residue protein sequence, read N- to C-terminus: Small ribosomal subunit protein uS11 (139 aa).

It belongs to the universal ribosomal protein uS11 family. As to quaternary structure, part of the 30S ribosomal subunit.

Functionally, located on the platform of the 30S subunit. This is Small ribosomal subunit protein uS11 from Pyrobaculum islandicum (strain DSM 4184 / JCM 9189 / GEO3).